Reading from the N-terminus, the 468-residue chain is uncharacterized protein (468 aa).

The interval 447–468 (AVHVSNGDKPKVALPDTQLGSH) is disordered.

Belongs to the mycobacterial PPE family.

This is an uncharacterized protein from Mycobacterium tuberculosis (strain CDC 1551 / Oshkosh).